A 494-amino-acid polypeptide reads, in one-letter code: Anthranilate synthase component 1 (494 aa).

L-tryptophan-binding positions include serine 52 and 274–276 (PYM). 309–310 (GT) contributes to the chorismate binding site. Glutamate 336 is a binding site for Mg(2+). Residues tyrosine 424, arginine 444, 458-460 (GAG), and glycine 460 each bind chorismate. Mg(2+) is bound at residue glutamate 473.

This sequence belongs to the anthranilate synthase component I family. Heterotetramer consisting of two non-identical subunits: a beta subunit (TrpG) and a large alpha subunit (TrpE). It depends on Mg(2+) as a cofactor.

The catalysed reaction is chorismate + L-glutamine = anthranilate + pyruvate + L-glutamate + H(+). Its pathway is amino-acid biosynthesis; L-tryptophan biosynthesis; L-tryptophan from chorismate: step 1/5. Feedback inhibited by tryptophan. Its function is as follows. Part of a heterotetrameric complex that catalyzes the two-step biosynthesis of anthranilate, an intermediate in the biosynthesis of L-tryptophan. In the first step, the glutamine-binding beta subunit (TrpG) of anthranilate synthase (AS) provides the glutamine amidotransferase activity which generates ammonia as a substrate that, along with chorismate, is used in the second step, catalyzed by the large alpha subunit of AS (TrpE) to produce anthranilate. In the absence of TrpG, TrpE can synthesize anthranilate directly from chorismate and high concentrations of ammonia. The protein is Anthranilate synthase component 1 (trpE) of Aquifex aeolicus (strain VF5).